The primary structure comprises 505 residues: Lysine--tRNA ligase (505 aa).

Mg(2+)-binding residues include glutamate 415 and glutamate 422.

Belongs to the class-II aminoacyl-tRNA synthetase family. In terms of assembly, homodimer. It depends on Mg(2+) as a cofactor.

The protein localises to the cytoplasm. The catalysed reaction is tRNA(Lys) + L-lysine + ATP = L-lysyl-tRNA(Lys) + AMP + diphosphate. The chain is Lysine--tRNA ligase from Salmonella arizonae (strain ATCC BAA-731 / CDC346-86 / RSK2980).